We begin with the raw amino-acid sequence, 1173 residues long: Eukaryotic translation initiation factor 3 subunit A (1173 aa).

One can recognise a PCI domain in the interval 319-502 (LQRMAAHVLL…NSIYFGTDLT (184 aa)). 2 disordered regions span residues 589-613 (QNNA…LAEQ) and 836-1173 (AAEA…PVQL). Composition is skewed to basic and acidic residues over residues 836 to 900 (AAEA…RGGD), 925 to 1011 (DRNE…EPDS), 1028 to 1081 (SRDD…DAAP), and 1090 to 1125 (DAPR…RAPK). The segment covering 1128 to 1142 (GPSGGTGTAAGGGGN) has biased composition (gly residues). Over residues 1149-1165 (PRDEPAPKRDQPQDKGK) the composition is skewed to basic and acidic residues.

Belongs to the eIF-3 subunit A family. Component of the eukaryotic translation initiation factor 3 (eIF-3) complex. The eIF-3 complex interacts with pix.

Its subcellular location is the cytoplasm. Its function is as follows. RNA-binding component of the eukaryotic translation initiation factor 3 (eIF-3) complex, which is involved in protein synthesis of a specialized repertoire of mRNAs and, together with other initiation factors, stimulates binding of mRNA and methionyl-tRNAi to the 40S ribosome. The eIF-3 complex specifically targets and initiates translation of a subset of mRNAs involved in cell proliferation. This Drosophila persimilis (Fruit fly) protein is Eukaryotic translation initiation factor 3 subunit A.